The following is a 246-amino-acid chain: MKALIIDDEPLARNELTYLLNEIGGFEEINEAENVKETLEALLINQYDIIFLDVNLMDENGIELGAKIQKMKEPPAIIFATAHDQYAVQAFELNATDYILKPFGQKRIEQAVNKVRATKAKDDNNASAIANDMSANFDQSLPVEIDDKIHMLKQQNIIGIGTHNGITTIHTTNHKYETTEPLNRYEKRLNPTYFIRIHRSYIINTKHIKEVQQWFNYTYMVILTNGVKMQVGRSFMKDFKASIGLL.

One can recognise a Response regulatory domain in the interval 2–116 (KALIIDDEPL…RIEQAVNKVR (115 aa)). Asp-53 bears the 4-aspartylphosphate mark. The region spanning 141–245 (LPVEIDDKIH…MKDFKASIGL (105 aa)) is the HTH LytTR-type domain.

Homodimer; when phosphorylated. Post-translationally, phosphorylated and dephosphorylated by LytS.

It localises to the cytoplasm. Member of the two-component regulatory system LytR/LytS that regulates genes involved in autolysis, programmed cell death, biofilm formation and cell wall metabolism. Also participates in sensing and responding to host defense cationic antimicrobial peptides (HDPs). Upon phosphorylation by LytS, functions as a transcription regulator by direct binding to promoter regions of target genes including lrgA and lrgB, to positively regulate their expression. This is Transcriptional regulatory protein LytR (lytR) from Staphylococcus aureus (strain USA300).